The primary structure comprises 492 residues: 3-octaprenyl-4-hydroxybenzoate carboxy-lyase (492 aa).

Residue N177 participates in Mn(2+) binding. Prenylated FMN is bound by residues 180–182 (IYR), 194–196 (RWL), and 199–200 (RG). E243 contacts Mn(2+). D292 serves as the catalytic Proton donor.

This sequence belongs to the UbiD family. Homohexamer. Requires prenylated FMN as cofactor. It depends on Mn(2+) as a cofactor.

It is found in the cell membrane. It catalyses the reaction a 4-hydroxy-3-(all-trans-polyprenyl)benzoate + H(+) = a 2-(all-trans-polyprenyl)phenol + CO2. It participates in cofactor biosynthesis; ubiquinone biosynthesis. Catalyzes the decarboxylation of 3-octaprenyl-4-hydroxy benzoate to 2-octaprenylphenol, an intermediate step in ubiquinone biosynthesis. The chain is 3-octaprenyl-4-hydroxybenzoate carboxy-lyase from Neisseria meningitidis serogroup B (strain ATCC BAA-335 / MC58).